The sequence spans 401 residues: MIVQDSVCSELMRGCEEILPVPELEKKLQKGIPLKIKAGFDPTAPDLHLGHTVLLNKLRQFQQFGHEVIFLIGDFTAMIGDPTGKNVTRMPLSQETVLENAKTYQHQVFKILDPDKTTVAFNSQWLNKFNAVDLIRLAATHTVARMLERDDFNKRYTTGQPIAIHEFLYPLLQGYDSVALKADVELGGTDQKFNLLMGRELQKHYGFEPQVVMMTPLIEGLDGVKKMSKSLDNYIGINETPEQMFGKIMSVSDELMWRYIDLLSFKTGKEIQQLKQSVLEGKNPRDVKIDFAKEIVARFHDQTQAEFAHNKFIERFQKGNIPEDLEELSLVIAEPIALAQLLKQIDLTASTSESIRMVKQGAVKVDGDKISDPSLKLPIGKSYIIQVGKRRIAKLSIQQAD.

Positions 42-51 (PTAPDLHLGH) match the 'HIGH' region motif. The 'KMSKS' region signature appears at 226–230 (KMSKS). K229 contributes to the ATP binding site. The S4 RNA-binding domain maps to 336–397 (IALAQLLKQI…GKRRIAKLSI (62 aa)).

The protein belongs to the class-I aminoacyl-tRNA synthetase family. TyrS type 2 subfamily. Homodimer.

Its subcellular location is the cytoplasm. It catalyses the reaction tRNA(Tyr) + L-tyrosine + ATP = L-tyrosyl-tRNA(Tyr) + AMP + diphosphate + H(+). Functionally, catalyzes the attachment of tyrosine to tRNA(Tyr) in a two-step reaction: tyrosine is first activated by ATP to form Tyr-AMP and then transferred to the acceptor end of tRNA(Tyr). This Legionella pneumophila subsp. pneumophila (strain Philadelphia 1 / ATCC 33152 / DSM 7513) protein is Tyrosine--tRNA ligase.